The chain runs to 413 residues: Putative ankyrin repeat protein L92 (413 aa).

ANK repeat units follow at residues 1-28 (MCAC…DINC), 32-67 (DGMS…DVNL), 68-104 (TVDG…LFES), 105-134 (DDDD…NIEA), 137-170 (DGET…KTNI), 174-208 (DRKT…NINY), 212-242 (IGET…NPNI), and 246-275 (SGNT…SPEI).

This Acanthamoeba polyphaga mimivirus (APMV) protein is Putative ankyrin repeat protein L92.